The sequence spans 83 residues: Cytochrome b559 subunit alpha (83 aa).

A helical membrane pass occupies residues 21 to 35; it reads VIHSITIPSLFIAGW. A heme-binding site is contributed by histidine 23.

It belongs to the PsbE/PsbF family. As to quaternary structure, heterodimer of an alpha subunit and a beta subunit. PSII is composed of 1 copy each of membrane proteins PsbA, PsbB, PsbC, PsbD, PsbE, PsbF, PsbH, PsbI, PsbJ, PsbK, PsbL, PsbM, PsbT, PsbX, PsbY, PsbZ, Psb30/Ycf12, at least 3 peripheral proteins of the oxygen-evolving complex and a large number of cofactors. It forms dimeric complexes. Heme b is required as a cofactor.

It is found in the plastid. The protein localises to the chloroplast thylakoid membrane. This b-type cytochrome is tightly associated with the reaction center of photosystem II (PSII). PSII is a light-driven water:plastoquinone oxidoreductase that uses light energy to abstract electrons from H(2)O, generating O(2) and a proton gradient subsequently used for ATP formation. It consists of a core antenna complex that captures photons, and an electron transfer chain that converts photonic excitation into a charge separation. The sequence is that of Cytochrome b559 subunit alpha from Huperzia lucidula (Shining clubmoss).